The chain runs to 119 residues: Non-specific lipid-transfer protein 12 (119 aa).

The signal sequence occupies residues 1–24 (MAFTPKIITCLIVLTIYMASPTES). 4 disulfide bridges follow: Cys28–Cys75, Cys38–Cys52, Cys53–Cys98, and Cys73–Cys112.

The protein belongs to the plant LTP family.

Functionally, plant non-specific lipid-transfer proteins transfer phospholipids as well as galactolipids across membranes. May play a role in wax or cutin deposition in the cell walls of expanding epidermal cells and certain secretory tissues. The chain is Non-specific lipid-transfer protein 12 (LTP12) from Arabidopsis thaliana (Mouse-ear cress).